The primary structure comprises 431 residues: MTNLLWQKPGVAVDAKIQSFLAGDDVILDREFFLHDIAASKAHAQGLQHIGILSPQELDGLSEQLDLLAEDFRGGAFVLDEQYEDCHSAIEARLTERLGDAGRKIHTGRSRNDQILVATRLWLKDKLQRVATLSAEIAKVALDRAQAEAELPVPGYTHIQRAVVSSAGMWWAGWAEAFIDNAVRATDTLQLVDSNPLGTAAGYGVNLPLDRAHTTAELGFARLQVSPIYAQLSRGKYELAALEALGSATLDLRRIAWDVSLFTSGEFAFVALPAQYTTGSSIMPNKRNPDVIELMRATHASVAAARTEIEQLLSLPSGYHRDLQSSKGAIVHGFGRGLAALELLPALLANLEWRPDKLRAAIDSGMYATDVAVEAAVAGVPFREAYKAAAEASDTAGQGRTPEGSLAARVSPGAAADLQLDVLLARWETLR.

Belongs to the lyase 1 family. Argininosuccinate lyase subfamily.

It localises to the cytoplasm. The enzyme catalyses 2-(N(omega)-L-arginino)succinate = fumarate + L-arginine. Its pathway is amino-acid biosynthesis; L-arginine biosynthesis; L-arginine from L-ornithine and carbamoyl phosphate: step 3/3. The sequence is that of Argininosuccinate lyase from Xanthomonas oryzae pv. oryzae (strain MAFF 311018).